The primary structure comprises 21 residues: AMASSLLSGWGGPTTLLVAPM.

In Pinus strobus (Eastern white pine), this protein is Putative NADH dehydrogenase subunit PS9.